Reading from the N-terminus, the 222-residue chain is Probable glutathione-independent glyoxalase hsp3104 (222 aa).

Catalysis depends on residues Cys124, His125, and Glu155.

This sequence belongs to the peptidase C56 family. HSP31-like subfamily.

Its subcellular location is the cytoplasm. The enzyme catalyses methylglyoxal + H2O = (R)-lactate + H(+). Catalyzes the conversion of methylglyoxal (MG) to D-lactate in a single glutathione (GSH)-independent step. May play a role in detoxifying endogenously produced glyoxals. Involved in protection against reactive oxygen species (ROS). This is Probable glutathione-independent glyoxalase hsp3104 from Schizosaccharomyces pombe (strain 972 / ATCC 24843) (Fission yeast).